The primary structure comprises 669 residues: Acetolactate synthase, mitochondrial (669 aa).

A mitochondrion-targeting transit peptide spans 1 to 140 (MTVLAPLRRL…PRHEQAAGHA (140 aa)). Glu-134 contributes to the thiamine diphosphate binding site. FAD-binding positions include Arg-236, 351–372 (HGSG…LGVR), and 403–422 (DISP…IEGD). A thiamine pyrophosphate binding region spans residues 497 to 577 (AHQMWAATFY…VKILILNNEE (81 aa)). The Mg(2+) site is built by Asp-548 and Asn-575.

This sequence belongs to the TPP enzyme family. It depends on Mg(2+) as a cofactor. The cofactor is thiamine diphosphate.

The protein localises to the mitochondrion. It carries out the reaction 2 pyruvate + H(+) = (2S)-2-acetolactate + CO2. Its pathway is amino-acid biosynthesis; L-isoleucine biosynthesis; L-isoleucine from 2-oxobutanoate: step 1/4. It participates in amino-acid biosynthesis; L-valine biosynthesis; L-valine from pyruvate: step 1/4. In Schizosaccharomyces pombe (strain 972 / ATCC 24843) (Fission yeast), this protein is Acetolactate synthase, mitochondrial (ilv1).